The following is a 392-amino-acid chain: Dihydroorotate dehydrogenase (quinone) (392 aa).

FMN is bound by residues 90-94 (AGFDK) and Thr114. Lys94 serves as a coordination point for substrate. Residue 139–143 (NRMGF) participates in substrate binding. FMN is bound by residues Asn173 and Asn206. Substrate is bound at residue Asn206. Ser209 acts as the Nucleophile in catalysis. Residue Asn211 participates in substrate binding. The FMN site is built by Lys243 and Val271. 272–273 (NT) serves as a coordination point for substrate. FMN is bound by residues Gly301, Gly330, and 351 to 352 (YT).

The protein belongs to the dihydroorotate dehydrogenase family. Type 2 subfamily. As to quaternary structure, monomer. It depends on FMN as a cofactor.

It localises to the cell membrane. The enzyme catalyses (S)-dihydroorotate + a quinone = orotate + a quinol. The protein operates within pyrimidine metabolism; UMP biosynthesis via de novo pathway; orotate from (S)-dihydroorotate (quinone route): step 1/1. Catalyzes the conversion of dihydroorotate to orotate with quinone as electron acceptor. The sequence is that of Dihydroorotate dehydrogenase (quinone) from Prochlorococcus marinus (strain MIT 9313).